The chain runs to 313 residues: Ribosomal RNA small subunit methyltransferase H (313 aa).

S-adenosyl-L-methionine-binding positions include 35–37 (GGH), D55, F79, D100, and Q107.

This sequence belongs to the methyltransferase superfamily. RsmH family.

It localises to the cytoplasm. The enzyme catalyses cytidine(1402) in 16S rRNA + S-adenosyl-L-methionine = N(4)-methylcytidine(1402) in 16S rRNA + S-adenosyl-L-homocysteine + H(+). Specifically methylates the N4 position of cytidine in position 1402 (C1402) of 16S rRNA. The sequence is that of Ribosomal RNA small subunit methyltransferase H from Burkholderia orbicola (strain MC0-3).